Here is a 286-residue protein sequence, read N- to C-terminus: Mycolic acid methyltransferase MmaA1 (286 aa).

Residues 32–33, 71–73, 93–98, and 122–123 each bind S-adenosyl-L-methionine; these read YT, GCG, TLSRNH, and WE. The active site involves Cys268.

Belongs to the CFA/CMAS family.

It participates in lipid metabolism; mycolic acid biosynthesis. Involved in the conversion of a cis-olefin into a trans-olefin with concomitant introduction of an allylic methyl branch at the proximal position of the precursor to both the methoxy and ketomycolic acids. It directly affects the cis- to trans ratio and indirectly affects the keto to methoxy ratio. The sequence is that of Mycolic acid methyltransferase MmaA1 (cmaD) from Mycobacterium bovis (strain ATCC BAA-935 / AF2122/97).